Reading from the N-terminus, the 432-residue chain is 3-isopropylmalate dehydratase large subunit (432 aa).

Residues Cys299, Cys364, and Cys367 each contribute to the [4Fe-4S] cluster site.

Belongs to the aconitase/IPM isomerase family. LeuC type 2 subfamily. In terms of assembly, heterodimer of LeuC and LeuD. [4Fe-4S] cluster is required as a cofactor.

It carries out the reaction (2R,3S)-3-isopropylmalate = (2S)-2-isopropylmalate. It participates in amino-acid biosynthesis; L-leucine biosynthesis; L-leucine from 3-methyl-2-oxobutanoate: step 2/4. In terms of biological role, catalyzes the isomerization between 2-isopropylmalate and 3-isopropylmalate, via the formation of 2-isopropylmaleate. The sequence is that of 3-isopropylmalate dehydratase large subunit from Aquifex aeolicus (strain VF5).